The sequence spans 954 residues: Centrosomal protein of 112 kDa (954 aa).

Positions 276 to 954 (QKHDAEVQKI…EELTTYQSRR (679 aa)) form a coiled coil.

It localises to the cytoplasm. Its subcellular location is the cytoskeleton. It is found in the microtubule organizing center. The protein resides in the centrosome. The polypeptide is Centrosomal protein of 112 kDa (Cep112) (Mus musculus (Mouse)).